Reading from the N-terminus, the 325-residue chain is Pyruvate dehydrogenase E1 component subunit beta (325 aa).

Glutamate 60 contributes to the thiamine diphosphate binding site.

In terms of assembly, heterodimer of an alpha and a beta chain. It depends on thiamine diphosphate as a cofactor.

It carries out the reaction N(6)-[(R)-lipoyl]-L-lysyl-[protein] + pyruvate + H(+) = N(6)-[(R)-S(8)-acetyldihydrolipoyl]-L-lysyl-[protein] + CO2. In terms of biological role, the pyruvate dehydrogenase complex catalyzes the overall conversion of pyruvate to acetyl-CoA and CO(2). It contains multiple copies of three enzymatic components: pyruvate dehydrogenase (E1), dihydrolipoamide acetyltransferase (E2) and lipoamide dehydrogenase (E3). This chain is Pyruvate dehydrogenase E1 component subunit beta (pdhB), found in Staphylococcus aureus (strain Mu50 / ATCC 700699).